A 131-amino-acid polypeptide reads, in one-letter code: Arsenate reductase (131 aa).

Residues Cys10, Cys82, and Cys89 each act as nucleophile in the active site. Disulfide bonds link Cys10/Cys82 and Cys82/Cys89.

This sequence belongs to the low molecular weight phosphotyrosine protein phosphatase family. Thioredoxin-coupled ArsC subfamily.

It localises to the cytoplasm. The catalysed reaction is arsenate + [thioredoxin]-dithiol + H(+) = arsenite + [thioredoxin]-disulfide + H2O. Functionally, catalyzes the reduction of arsenate [As(V)] to arsenite [As(III)]. This chain is Arsenate reductase, found in Staphylococcus aureus (strain COL).